Here is a 725-residue protein sequence, read N- to C-terminus: Protein ALEX (725 aa).

Disordered stretches follow at residues 1–93 (MSPS…ARAQ), 177–226 (GAIA…PLTD), 256–340 (EPPL…PSQP), 396–481 (PILT…SPLL), 508–528 (PMQVHWSGEPGHSQLLPPLGH), 584–624 (LPGL…AASS), and 638–675 (ATRSGATQSATSSPEPSEAASVYPSVPDHDPSAPGRPR). The segment covering 41–51 (HLRRKPCHSRH) has biased composition (basic residues). Residues 260–276 (GSTTTPLSIWTAPQSQV) are compositionally biased toward polar residues. Basic and acidic residues-rich tracts occupy residues 297-307 (QLSEKQPRWKE) and 314-326 (RWKEKSPLRREGT). Pro residues-rich tracts occupy residues 423–442 (PSQPPRQSLPPRPSLPPGQP) and 459–473 (RSLPPGQPLSPPRSP). Low complexity-rich tracts occupy residues 584 to 598 (LPGLTSTSGAEAAAG) and 643 to 658 (ATQSATSSPEPSEAAS).

It belongs to the ALEX family. Interacts with the N-terminal region of the XLas isoforms of guanine nucleotide-binding protein G(s) subunit alpha.

The protein localises to the cell membrane. It localises to the cell projection. It is found in the ruffle. Its function is as follows. May inhibit the adenylyl cyclase-stimulating activity of guanine nucleotide-binding protein G(s) subunit alpha which is produced from the same locus in a different open reading frame. The chain is Protein ALEX from Mus musculus (Mouse).